The chain runs to 231 residues: 2-C-methyl-D-erythritol 4-phosphate cytidylyltransferase (231 aa).

The protein belongs to the IspD/TarI cytidylyltransferase family. IspD subfamily.

It catalyses the reaction 2-C-methyl-D-erythritol 4-phosphate + CTP + H(+) = 4-CDP-2-C-methyl-D-erythritol + diphosphate. The protein operates within isoprenoid biosynthesis; isopentenyl diphosphate biosynthesis via DXP pathway; isopentenyl diphosphate from 1-deoxy-D-xylulose 5-phosphate: step 2/6. In terms of biological role, catalyzes the formation of 4-diphosphocytidyl-2-C-methyl-D-erythritol from CTP and 2-C-methyl-D-erythritol 4-phosphate (MEP). This Lysinibacillus sphaericus (strain C3-41) protein is 2-C-methyl-D-erythritol 4-phosphate cytidylyltransferase.